The sequence spans 204 residues: Holliday junction branch migration complex subunit RuvA (204 aa).

The tract at residues 1–65 is domain I; sequence MIGRLRGAVA…SAGLRLYGFG (65 aa). The domain II stretch occupies residues 66–142; the sequence is TREDRRAFVL…PITDGPVLMT (77 aa). The tract at residues 143-152 is flexible linker; that stretch reads APGAVAAAPA. Residues 152-204 are domain III; that stretch reads AKAAPTGDAVAALMGLGVAEVNARRVVEAAAAKLGDEATVQALIKAGLQELGR.

It belongs to the RuvA family. In terms of assembly, homotetramer. Forms an RuvA(8)-RuvB(12)-Holliday junction (HJ) complex. HJ DNA is sandwiched between 2 RuvA tetramers; dsDNA enters through RuvA and exits via RuvB. An RuvB hexamer assembles on each DNA strand where it exits the tetramer. Each RuvB hexamer is contacted by two RuvA subunits (via domain III) on 2 adjacent RuvB subunits; this complex drives branch migration. In the full resolvosome a probable DNA-RuvA(4)-RuvB(12)-RuvC(2) complex forms which resolves the HJ.

It is found in the cytoplasm. In terms of biological role, the RuvA-RuvB-RuvC complex processes Holliday junction (HJ) DNA during genetic recombination and DNA repair, while the RuvA-RuvB complex plays an important role in the rescue of blocked DNA replication forks via replication fork reversal (RFR). RuvA specifically binds to HJ cruciform DNA, conferring on it an open structure. The RuvB hexamer acts as an ATP-dependent pump, pulling dsDNA into and through the RuvAB complex. HJ branch migration allows RuvC to scan DNA until it finds its consensus sequence, where it cleaves and resolves the cruciform DNA. The protein is Holliday junction branch migration complex subunit RuvA of Caulobacter sp. (strain K31).